The sequence spans 249 residues: Superoxide dismutase 1 copper chaperone (249 aa).

Positions 6-69 (TYEATYAIPM…TLRNCGKDAI (64 aa)) constitute an HMA domain. Residue H16 coordinates Zn(2+). Cu cation contacts are provided by C17 and C20. Residues C27 and C64 are joined by a disulfide bond. The Cu cation site is built by C229 and C231.

Belongs to the CCS1 family. In terms of assembly, homodimer, and heterodimer with apo-SOD1. Zinc-binding at His-16 of CCS1 and 'Glu-43' of apo-SOD1 is required for this heterodimerization. It depends on Cu(2+) as a cofactor.

The protein resides in the cytoplasm. The protein localises to the mitochondrion intermembrane space. Its function is as follows. Copper chaperone for apo superoxide dismutase 1 (SOD1). Binds copper ions and delivers them specifically to apo-SOD1. This is Superoxide dismutase 1 copper chaperone (CCS1) from Saccharomyces cerevisiae (strain ATCC 204508 / S288c) (Baker's yeast).